A 296-amino-acid polypeptide reads, in one-letter code: Triplex capsid protein 2 (296 aa).

It belongs to the herpesviridae TRX2 protein family. In terms of assembly, interacts with TRX1 and major capisd protein/MCP.

The protein resides in the virion. It is found in the host nucleus. Its function is as follows. Structural component of the T=16 icosahedral capsid. The capsid is composed of pentamers and hexamers of major capsid protein/MCP, which are linked together by heterotrimers called triplexes. These triplexes are formed by a single molecule of triplex protein 1/TRX1 and two copies of triplex protein 2/TRX2. Additionally, TRX1 is required for efficient transport of TRX2 to the nucleus, which is the site of capsid assembly. This Human herpesvirus 6A (strain Uganda-1102) (HHV-6 variant A) protein is Triplex capsid protein 2.